A 79-amino-acid chain; its full sequence is Apolipoprotein C-II (79 aa).

Positions 1 to 21 (MDLKVVAVSFLLLVLCSEAAG) are cleaved as a signal peptide. Residues 45 to 52 (GVEKLRDI) are lipid binding. Positions 56–79 (SVDAVGTYTSILTDQLYHWWCGEQ) are lipoprotein lipase cofactor.

Belongs to the apolipoprotein C2 family. Post-translationally, proapolipoprotein C-II is synthesized as a sialic acid containing glycoprotein which is subsequently desialylated prior to its proteolytic processing. In terms of processing, proapolipoprotein C-II, the major form found in plasma undergoes proteolytic cleavage of its N-terminal hexapeptide to generate apolipoprotein C-II, which occurs as the minor form in plasma.

The protein localises to the secreted. Its function is as follows. Component of chylomicrons, very low-density lipoproteins (VLDL), low-density lipoproteins (LDL), and high-density lipoproteins (HDL) in plasma. Plays an important role in lipoprotein metabolism as an activator of lipoprotein lipase. Both proapolipoprotein C-II and apolipoprotein C-II can activate lipoprotein lipase. The chain is Apolipoprotein C-II (APOC2) from Alligator mississippiensis (American alligator).